Consider the following 239-residue polypeptide: Bidirectional sugar transporter SWEET8 (239 aa).

Over 1–6 (MVDAKQ) the chain is Extracellular. Residues 7 to 27 (VRFIIGVIGNVISFGLFAAPA) traverse the membrane as a helical segment. In terms of domain architecture, MtN3/slv 1 spans 9 to 98 (FIIGVIGNVI…VYLMYCGHKK (90 aa)). Residues 28-44 (KTFWRIFKKKSVEEFSY) are Cytoplasmic-facing. A helical transmembrane segment spans residues 45 to 65 (VPYVATVMNCMLWVFYGLPVV). Residues 66 to 69 (HKDS) lie on the Extracellular side of the membrane. Residues 70-90 (ILVSTINGVGLVIELFYVGVY) traverse the membrane as a helical segment. Residues 91-103 (LMYCGHKKNHRRN) lie on the Cytoplasmic side of the membrane. A helical membrane pass occupies residues 104-124 (ILGFLALEVILVVAIILITLF). The Extracellular segment spans residues 125–135 (ALKGDFVKQTF). A MtN3/slv 2 domain is found at 134–185 (TFVGVICDVFNIAMYGAPSLAIIKVVKTKSVEYMPFLLSLVCFVNAGIWTTY). A helical transmembrane segment spans residues 136 to 156 (VGVICDVFNIAMYGAPSLAII). The Cytoplasmic segment spans residues 157–168 (KVVKTKSVEYMP). The chain crosses the membrane as a helical span at residues 169 to 189 (FLLSLVCFVNAGIWTTYSLIF). The Extracellular segment spans residues 190–194 (KIDYY). Residues 195-215 (VLASNGIGTFLALSQLIVYFM) traverse the membrane as a helical segment. The Cytoplasmic segment spans residues 216-239 (YYKSTPKEKTVKPSEVEISATERV).

The protein belongs to the SWEET sugar transporter family. In terms of assembly, forms homooligomers and heterooligomers with SWEET4, SWEET5, SWEET6, SWEET7, SWEET9, SWEET10, SWEET11, SWEET13, SWEET15, SWEET16 and SWEET17. As to expression, expressed in inflorescences, embryo sacs and pollen, and at a lower level in stems. Barely detected in roots, leaves and seedlings.

The protein localises to the cell membrane. Its function is as follows. Mediates both low-affinity uptake and efflux of sugar across the plasma membrane. Required, in pollen, for microspore cell integrity and primexine pattern formation. The protein is Bidirectional sugar transporter SWEET8 of Arabidopsis thaliana (Mouse-ear cress).